Reading from the N-terminus, the 617-residue chain is V-type proton ATPase catalytic subunit A (617 aa).

Thr136 is subject to Phosphothreonine. 250-257 (GAFGCGKT) serves as a coordination point for ATP. A Phosphoserine; by AMPK modification is found at Ser384.

Belongs to the ATPase alpha/beta chains family. In terms of assembly, V-ATPase is a heteromultimeric enzyme made up of two complexes: the ATP-hydrolytic V1 complex and the proton translocation V0 complex. The V1 complex consists of three catalytic AB heterodimers that form a heterohexamer, three peripheral stalks each consisting of EG heterodimers, one central rotor including subunits D and F, and the regulatory subunits C and H. The proton translocation complex V0 consists of the proton transport subunit a, a ring of proteolipid subunits c9c'', rotary subunit d, subunits e and f, and the accessory subunits ATP6AP1/Ac45 and ATP6AP2/PRR. Interacts with the V0 complex V-ATPase subunit a4 ATP6V0A4. Interacts with WFS1. Interacts with alpha-crystallin B chain/CRYAB and with MTOR, forming a ternary complex. In terms of processing, phosphorylation at Ser-384 by AMPK down-regulates its enzyme activity.

It localises to the cytoplasm. The protein localises to the cytosol. Its subcellular location is the cytoplasmic vesicle. The protein resides in the secretory vesicle. It is found in the clathrin-coated vesicle membrane. It localises to the lysosome. It catalyses the reaction ATP + H2O + 4 H(+)(in) = ADP + phosphate + 5 H(+)(out). Its activity is regulated as follows. ATP hydrolysis occurs at the interface between the nucleotide-binding domains of subunits A and B. ATP hydrolysis triggers a conformational change in the subunits D and F, which induces a shift of subunit d. The c-ring is subsequently rotated and results in a continuous proton translocation across the membrane. Catalytic subunit of the V1 complex of vacuolar(H+)-ATPase (V-ATPase), a multisubunit enzyme composed of a peripheral complex (V1) that hydrolyzes ATP and a membrane integral complex (V0) that translocates protons. V-ATPase is responsible for acidifying and maintaining the pH of intracellular compartments and in some cell types, is targeted to the plasma membrane, where it is responsible for acidifying the extracellular environment. In aerobic conditions, involved in intracellular iron homeostasis, thus triggering the activity of Fe(2+) prolyl hydroxylase (PHD) enzymes, and leading to HIF1A hydroxylation and subsequent proteasomal degradation. May play a role in neurite development and synaptic connectivity. In Pongo abelii (Sumatran orangutan), this protein is V-type proton ATPase catalytic subunit A (ATP6V1A).